The chain runs to 386 residues: Queuine tRNA-ribosyltransferase (386 aa).

The Proton acceptor role is filled by Asp-99. Substrate-binding positions include 99 to 103 (DSGGF), Asp-153, Gln-198, and Gly-225. The RNA binding stretch occupies residues 256 to 262 (GVGKPED). The Nucleophile role is filled by Asp-275. An RNA binding; important for wobble base 34 recognition region spans residues 280–284 (TRNAR). Residues Cys-313, Cys-315, Cys-318, and His-344 each contribute to the Zn(2+) site.

It belongs to the queuine tRNA-ribosyltransferase family. Homodimer. Within each dimer, one monomer is responsible for RNA recognition and catalysis, while the other monomer binds to the replacement base PreQ1. Zn(2+) serves as cofactor.

It carries out the reaction 7-aminomethyl-7-carbaguanine + guanosine(34) in tRNA = 7-aminomethyl-7-carbaguanosine(34) in tRNA + guanine. The protein operates within tRNA modification; tRNA-queuosine biosynthesis. In terms of biological role, catalyzes the base-exchange of a guanine (G) residue with the queuine precursor 7-aminomethyl-7-deazaguanine (PreQ1) at position 34 (anticodon wobble position) in tRNAs with GU(N) anticodons (tRNA-Asp, -Asn, -His and -Tyr). Catalysis occurs through a double-displacement mechanism. The nucleophile active site attacks the C1' of nucleotide 34 to detach the guanine base from the RNA, forming a covalent enzyme-RNA intermediate. The proton acceptor active site deprotonates the incoming PreQ1, allowing a nucleophilic attack on the C1' of the ribose to form the product. After dissociation, two additional enzymatic reactions on the tRNA convert PreQ1 to queuine (Q), resulting in the hypermodified nucleoside queuosine (7-(((4,5-cis-dihydroxy-2-cyclopenten-1-yl)amino)methyl)-7-deazaguanosine). The protein is Queuine tRNA-ribosyltransferase of Acinetobacter baylyi (strain ATCC 33305 / BD413 / ADP1).